We begin with the raw amino-acid sequence, 1538 residues long: Dicer-like protein 1 (1538 aa).

The tract at residues 39–72 is disordered; that stretch reads DPAESSADVHKDEHSSDNSDNDNEAVPKPNDFSQ. The segment covering 45-55 has biased composition (basic and acidic residues); the sequence is ADVHKDEHSSD. One can recognise a Helicase ATP-binding domain in the interval 134-315; that stretch reads LFERAKTQNT…EAATRLETLL (182 aa). Residue 147 to 154 coordinates ATP; that stretch reads LDTGSGKT. Residues 260-263 carry the DEAH box motif; sequence DEAH. The 160-residue stretch at 460–619 folds into the Helicase C-terminal domain; sequence ELSKHFSDTT…ETLPEDRILH (160 aa). Residues 652 to 742 enclose the Dicer dsRNA-binding fold domain; it reads AIAILARYAS…NSIYHRRLPA (91 aa). The PAZ domain maps to 892-1020; sequence DTVSFVHNND…ICAEPLRISA (129 aa). 2 RNase III domains span residues 1044-1203 and 1254-1406; these read IALE…LSGG and ARHV…VDSK. The Mg(2+) site is built by Glu-1295, Asp-1392, and Glu-1395. In terms of domain architecture, DRBM spans 1440–1508; that stretch reads TFLHNKLTNE…SEKALAVLDG (69 aa). Zn(2+) is bound by residues Cys-1452, His-1479, Cys-1520, and Cys-1522.

This sequence belongs to the helicase family. Dicer subfamily. The cofactor is Mg(2+). Requires Mn(2+) as cofactor.

Dicer-like endonuclease involved in cleaving double-stranded RNA in the RNA interference (RNAi) pathway. Produces 21 to 25 bp dsRNAs (siRNAs) which target the selective destruction of homologous RNAs leading to sequence-specific suppression of gene expression, called post-transcriptional gene silencing (PTGS). Part of a broad host defense response against viral infection and transposons. This Neosartorya fischeri (strain ATCC 1020 / DSM 3700 / CBS 544.65 / FGSC A1164 / JCM 1740 / NRRL 181 / WB 181) (Aspergillus fischerianus) protein is Dicer-like protein 1 (dcl1).